The sequence spans 528 residues: GMP synthase [glutamine-hydrolyzing] (528 aa).

The region spanning 13 to 204 (AIVILDFGSQ…VNHICGCEQD (192 aa)) is the Glutamine amidotransferase type-1 domain. Cys90 (nucleophile) is an active-site residue. Residues His178 and Glu180 contribute to the active site. Residues 205-403 (WTTNAFIDEA…LGLPEEIVRR (199 aa)) form the GMPS ATP-PPase domain. Residue 232 to 238 (SGGVDSS) participates in ATP binding.

In terms of assembly, homodimer.

It catalyses the reaction XMP + L-glutamine + ATP + H2O = GMP + L-glutamate + AMP + diphosphate + 2 H(+). It functions in the pathway purine metabolism; GMP biosynthesis; GMP from XMP (L-Gln route): step 1/1. In terms of biological role, catalyzes the synthesis of GMP from XMP. The sequence is that of GMP synthase [glutamine-hydrolyzing] from Synechococcus sp. (strain CC9902).